The primary structure comprises 492 residues: JmjC domain-containing histone demethylation protein 1 (492 aa).

The PHD-type; atypical zinc-finger motif lies at 4 to 72; sequence PNICQHCQLK…SYRCPNHKEG (69 aa). Residues 254–409 form the JmjC domain; that stretch reads TAVRQNDLVD…THLKIVEIEK (156 aa). Thr-302 contacts substrate. Fe cation contacts are provided by His-305 and Asp-307. Residue Lys-322 coordinates substrate. His-377 contacts Fe cation.

The protein belongs to the JHDM1 histone demethylase family. Requires Fe(2+) as cofactor.

The protein resides in the nucleus. It carries out the reaction N(6),N(6)-dimethyl-L-lysyl(36)-[histone H3] + 2 2-oxoglutarate + 2 O2 = L-lysyl(36)-[histone H3] + 2 formaldehyde + 2 succinate + 2 CO2. Its function is as follows. Histone demethylase that specifically demethylates 'Lys-36' of histone H3, thereby playing a central role in histone code. Does not demethylate H3 'Lys-4' nor 'Lys-79'. This Saccharomyces cerevisiae (strain ATCC 204508 / S288c) (Baker's yeast) protein is JmjC domain-containing histone demethylation protein 1 (JHD1).